The sequence spans 650 residues: DNA-directed RNA polymerase III subunit rpc3 (650 aa).

4 disordered regions span residues P133–T163, R264–R283, A288–M313, and L400–G440. Acidic residues predominate over residues G149–E158. Residues A288–G307 show a composition bias toward acidic residues. A leucine-zipper region spans residues T577–F598.

Belongs to the RNA polymerase beta chain family. In terms of assembly, component of the RNA polymerase III (Pol III) complex consisting of 17 subunits.

Its subcellular location is the nucleus. In terms of biological role, DNA-dependent RNA polymerase catalyzes the transcription of DNA into RNA using the four ribonucleoside triphosphates as substrates. Specific core component of RNA polymerase III which synthesizes small RNAs, such as 5S rRNA and tRNAs. This Aspergillus terreus (strain NIH 2624 / FGSC A1156) protein is DNA-directed RNA polymerase III subunit rpc3 (rpc82).